Here is a 594-residue protein sequence, read N- to C-terminus: MHEHLKEKLAILPDQPGCYLMKDKQGTVIYVGKAKVLKNRVRSYFTGSHDGKTLRLVGEIVDFEYIVTSSNLEALILELNLIKKYDPKYNIQLKDDKTYPFIKITAEKQPRLLITRNVKKDKGKYFGPYPNAQSAHETKKLLDRMYPLRKCTNMPDKVCLYYHMDQCLAPCVKEVTEEQNKEIVDEIIKFLNGGHKEVRSELEIKMYEASEKLEFERAKELRDQIAHIDAIMEKQKMIMSDLVDRDVFGYAVDKGWMCVQVFFVRKGKLIERDVSMFPIYDEPEEGFLTFIGQFYENSSHFKPKEIVVPGSIDSELVERFLEVEATQPKRGKKKDLVELANKNAKIALEEKFYLIERDEERTIKAVDHLGKQLGIETPYRIEAFDNSNIQGTNPVSAMIAFIDGKPAKKEYRKYKIKTVQGPDDYESMREVVRRRYTRALKENLPLPDLIIIDGGKGHLAAASDILEDELGLYIPMAGLVKDDKHKTSHLIIGDPPEPVVLERNSQEFYLLQRIQDEVHRFAITFHRQLHGKSVIQSALDDIPGIGDKRKKVLLKHFGSLKKMKEASVAEFVEAGMPKNVAETIYTYLTDKKTL.

The 78-residue stretch at 14–91 (DQPGCYLMKD…IKKYDPKYNI (78 aa)) folds into the GIY-YIG domain. The 36-residue stretch at 196–231 (KEVRSELEIKMYEASEKLEFERAKELRDQIAHIDAI) folds into the UVR domain.

The protein belongs to the UvrC family. As to quaternary structure, interacts with UvrB in an incision complex.

Its subcellular location is the cytoplasm. Functionally, the UvrABC repair system catalyzes the recognition and processing of DNA lesions. UvrC both incises the 5' and 3' sides of the lesion. The N-terminal half is responsible for the 3' incision and the C-terminal half is responsible for the 5' incision. The chain is UvrABC system protein C from Bacillus cereus (strain G9842).